A 177-amino-acid chain; its full sequence is MAELTTIARPYAKAAFDFAIENNAVDSWAEMLNFAALVSENESMKPLLTGGLASGKLAALFISVCGEQVNTQGQNLIKVMAENGRLEVLAAVSELFTGYRNEWAKEVEASVVSAIELSSEQQQQVSVSLEKRLARKVKLNCSTDTTLIAGMIIRAGDLVIDGSVSGQLARLSDKLQS.

The protein belongs to the ATPase delta chain family. In terms of assembly, F-type ATPases have 2 components, F(1) - the catalytic core - and F(0) - the membrane proton channel. F(1) has five subunits: alpha(3), beta(3), gamma(1), delta(1), epsilon(1). F(0) has three main subunits: a(1), b(2) and c(10-14). The alpha and beta chains form an alternating ring which encloses part of the gamma chain. F(1) is attached to F(0) by a central stalk formed by the gamma and epsilon chains, while a peripheral stalk is formed by the delta and b chains.

Its subcellular location is the cell inner membrane. Its function is as follows. F(1)F(0) ATP synthase produces ATP from ADP in the presence of a proton or sodium gradient. F-type ATPases consist of two structural domains, F(1) containing the extramembraneous catalytic core and F(0) containing the membrane proton channel, linked together by a central stalk and a peripheral stalk. During catalysis, ATP synthesis in the catalytic domain of F(1) is coupled via a rotary mechanism of the central stalk subunits to proton translocation. In terms of biological role, this protein is part of the stalk that links CF(0) to CF(1). It either transmits conformational changes from CF(0) to CF(1) or is implicated in proton conduction. This is ATP synthase subunit delta from Shewanella denitrificans (strain OS217 / ATCC BAA-1090 / DSM 15013).